Here is a 91-residue protein sequence, read N- to C-terminus: Putative ribonuclease inhibitor YrdF (91 aa).

It belongs to the barstar family.

The protein localises to the cytoplasm. The protein is Putative ribonuclease inhibitor YrdF (yrdF) of Bacillus subtilis (strain 168).